A 127-amino-acid polypeptide reads, in one-letter code: UPF0166 protein PYRAB06660 (127 aa).

The protein belongs to the UPF0166 family.

In Pyrococcus abyssi (strain GE5 / Orsay), this protein is UPF0166 protein PYRAB06660.